We begin with the raw amino-acid sequence, 111 residues long: Small ribosomal subunit protein bS16 (111 aa).

The protein belongs to the bacterial ribosomal protein bS16 family.

This Rickettsia typhi (strain ATCC VR-144 / Wilmington) protein is Small ribosomal subunit protein bS16.